A 470-amino-acid chain; its full sequence is Glutamate--tRNA ligase (470 aa).

Positions 9–19 (PSPTGFLHVGG) match the 'HIGH' region motif. The 'KMSKS' region motif lies at 236–240 (RLSKR). Residue Lys239 participates in ATP binding.

The protein belongs to the class-I aminoacyl-tRNA synthetase family. Glutamate--tRNA ligase type 1 subfamily. Monomer.

It is found in the cytoplasm. It carries out the reaction tRNA(Glu) + L-glutamate + ATP = L-glutamyl-tRNA(Glu) + AMP + diphosphate. Functionally, catalyzes the attachment of glutamate to tRNA(Glu) in a two-step reaction: glutamate is first activated by ATP to form Glu-AMP and then transferred to the acceptor end of tRNA(Glu). The chain is Glutamate--tRNA ligase from Legionella pneumophila (strain Lens).